A 215-amino-acid chain; its full sequence is Probable transaldolase (215 aa).

Lys-83 functions as the Schiff-base intermediate with substrate in the catalytic mechanism.

Belongs to the transaldolase family. Type 3B subfamily.

It localises to the cytoplasm. The catalysed reaction is D-sedoheptulose 7-phosphate + D-glyceraldehyde 3-phosphate = D-erythrose 4-phosphate + beta-D-fructose 6-phosphate. The protein operates within carbohydrate degradation; pentose phosphate pathway; D-glyceraldehyde 3-phosphate and beta-D-fructose 6-phosphate from D-ribose 5-phosphate and D-xylulose 5-phosphate (non-oxidative stage): step 2/3. Its function is as follows. Transaldolase is important for the balance of metabolites in the pentose-phosphate pathway. In Heliobacterium modesticaldum (strain ATCC 51547 / Ice1), this protein is Probable transaldolase.